Consider the following 72-residue polypeptide: Hypotensin-1 (72 aa).

The first 24 residues, 1-24 (MKMMIPVIFSILLLIFSLSSTAMS), serve as a signal peptide directing secretion. Residues 25 to 35 (LEDEQENMEER) constitute a propeptide that is removed on maturation. Ser-41 is subject to Phosphoserine. Residues 53–72 (ETNAKPPARFDPAAFEKSDD) form a disordered region. Positions 61-72 (RFDPAAFEKSDD) are excised as a propeptide.

Belongs to the non-disulfide-bridged peptide (NDBP) superfamily. Post-translationally, undergoes enzymatic cleavages by carboxypeptidases, endopeptidases, and aminopeptidases resulting in at least 46 fragments of this protein. In terms of tissue distribution, expressed by the venom gland.

Its subcellular location is the secreted. Functionally, agonist of the B2 bradykinin receptor (BDKRB2). Potentiates the hypotensive effect of bradykinin (BK) and induces a direct vasorelaxing effect independent of BK, by endothelium- and nitric oxide (NO)-dependent mechanisms in rat aortic ring preparations. Also exerts proangiogenic, antiinflammatory, and antifibrogenic activities. Does not inhibit the angiotensin-converting enzyme (ACE) but increases its activity, and inhibits neprilysin (NEP) in a non-competitive manner. Exerts intermediate cytotoxicity and pro-inflammatory effects on mouse macrophages, and increases the phagocytic activity of these murine cells. Presents moderate hemolytic activity at physiological concentrations (micromolar range). Does not induce mast cell degranulation, lactate dehydrogenase (LDH) release from mast cells and antimicrobial effects. In vivo, causes intense pain (but no edema formation), when injected in mice hind paws. Also induces discomfort and anxiety in mice, as it moderately diminishes locomotion and moderately increases rearing behavior. In Tityus serrulatus (Brazilian scorpion), this protein is Hypotensin-1.